We begin with the raw amino-acid sequence, 333 residues long: D-fructose 1,6-bisphosphatase class 2/sedoheptulose 1,7-bisphosphatase (333 aa).

Mn(2+) is bound by residues Asp33, Glu57, Asp85, and Glu88. Residues 88-90, Tyr119, 164-166, and 186-188 each bind substrate; these read EGT, RTR, and DGD. Glu213 contacts Mn(2+).

It belongs to the FBPase class 2 family. Homotetramer. Requires Mn(2+) as cofactor.

It carries out the reaction beta-D-fructose 1,6-bisphosphate + H2O = beta-D-fructose 6-phosphate + phosphate. The enzyme catalyses D-sedoheptulose 1,7-bisphosphate + H2O = D-sedoheptulose 7-phosphate + phosphate. It participates in carbohydrate biosynthesis; Calvin cycle. Its function is as follows. Catalyzes the hydrolysis of fructose 1,6-bisphosphate (Fru 1,6-P2) and sedoheptulose 1,7-bisphosphate (Sed 1,7-P2) to fructose 6-phosphate and sedoheptulose 7-phosphate, respectively. The polypeptide is D-fructose 1,6-bisphosphatase class 2/sedoheptulose 1,7-bisphosphatase (Prochlorococcus marinus (strain MIT 9301)).